A 560-amino-acid polypeptide reads, in one-letter code: Dihydroxy-acid dehydratase (560 aa).

Cysteine 50 contributes to the [2Fe-2S] cluster binding site. Mg(2+) is bound at residue aspartate 82. Cysteine 123 lines the [2Fe-2S] cluster pocket. Residues aspartate 124 and lysine 125 each contribute to the Mg(2+) site. Lysine 125 carries the post-translational modification N6-carboxylysine. Cysteine 195 contacts [2Fe-2S] cluster. Glutamate 447 is a Mg(2+) binding site. The active-site Proton acceptor is serine 473.

It belongs to the IlvD/Edd family. As to quaternary structure, homodimer. It depends on [2Fe-2S] cluster as a cofactor. Mg(2+) is required as a cofactor.

The catalysed reaction is (2R)-2,3-dihydroxy-3-methylbutanoate = 3-methyl-2-oxobutanoate + H2O. The enzyme catalyses (2R,3R)-2,3-dihydroxy-3-methylpentanoate = (S)-3-methyl-2-oxopentanoate + H2O. It participates in amino-acid biosynthesis; L-isoleucine biosynthesis; L-isoleucine from 2-oxobutanoate: step 3/4. The protein operates within amino-acid biosynthesis; L-valine biosynthesis; L-valine from pyruvate: step 3/4. Functionally, functions in the biosynthesis of branched-chain amino acids. Catalyzes the dehydration of (2R,3R)-2,3-dihydroxy-3-methylpentanoate (2,3-dihydroxy-3-methylvalerate) into 2-oxo-3-methylpentanoate (2-oxo-3-methylvalerate) and of (2R)-2,3-dihydroxy-3-methylbutanoate (2,3-dihydroxyisovalerate) into 2-oxo-3-methylbutanoate (2-oxoisovalerate), the penultimate precursor to L-isoleucine and L-valine, respectively. The chain is Dihydroxy-acid dehydratase from Thermosynechococcus vestitus (strain NIES-2133 / IAM M-273 / BP-1).